A 47-amino-acid polypeptide reads, in one-letter code: MKTATTTASHACPFCSGKGYFQLILGGSETCPSCQGTGKDSHSFSSR.

This is an uncharacterized protein from Bacillus subtilis (strain 168).